A 679-amino-acid polypeptide reads, in one-letter code: Protein CASP (679 aa).

Residues 1-614 are Cytoplasmic-facing; it reads MDTSVYSHAL…VILQNKMTRM (614 aa). 2 coiled-coil regions span residues 14 to 90 and 178 to 341; these read AKAD…EKVL and RNWK…NYSD. A Phosphoserine modification is found at Ser-364. The stretch at 385–444 forms a coiled coil; sequence ANKKLQATLAEYRSKSTAQEEERNELKKSVDQLKQQIATLKEANEKLETDLEKVENVSPH. Ser-450 and Ser-453 each carry phosphoserine. Residues 492–540 are a coiled coil; it reads IVTKQRDRFRSRNMDLEKQLRQGNSEKGKLKLEISKLKGDNTKLYERIR. Ser-555 bears the Phosphoserine mark. The helical; Anchor for type IV membrane protein transmembrane segment at 615-635 threads the bilayer; the sequence is VFLFYCIGLHGLVFMMSMYVI. Topologically, residues 636 to 679 are lumenal; that stretch reads NISGYMTPEVGIVQSAKSSSNLNGGLGGAEKVAAGVGSVHGINR.

Belongs to the CASP family.

The protein localises to the golgi apparatus membrane. Its function is as follows. May be involved in intra-Golgi transport. The sequence is that of Protein CASP (COY1) from Saccharomyces cerevisiae (strain ATCC 204508 / S288c) (Baker's yeast).